An 883-amino-acid polypeptide reads, in one-letter code: DNA mismatch repair protein MutS (883 aa).

633-640 (GPNMGGKS) is a binding site for ATP.

It belongs to the DNA mismatch repair MutS family.

Its function is as follows. This protein is involved in the repair of mismatches in DNA. It is possible that it carries out the mismatch recognition step. This protein has a weak ATPase activity. This Bordetella parapertussis (strain 12822 / ATCC BAA-587 / NCTC 13253) protein is DNA mismatch repair protein MutS.